Consider the following 260-residue polypeptide: Ribonuclease PH (260 aa).

Phosphate contacts are provided by residues Arg88 and 126-128 (GTR).

This sequence belongs to the RNase PH family. In terms of assembly, homohexameric ring arranged as a trimer of dimers.

It catalyses the reaction tRNA(n+1) + phosphate = tRNA(n) + a ribonucleoside 5'-diphosphate. In terms of biological role, phosphorolytic 3'-5' exoribonuclease that plays an important role in tRNA 3'-end maturation. Removes nucleotide residues following the 3'-CCA terminus of tRNAs; can also add nucleotides to the ends of RNA molecules by using nucleoside diphosphates as substrates, but this may not be physiologically important. Probably plays a role in initiation of 16S rRNA degradation (leading to ribosome degradation) during starvation. The chain is Ribonuclease PH from Mycobacterium sp. (strain JLS).